Consider the following 803-residue polypeptide: Leucine--tRNA ligase (803 aa).

The short motif at 40–51 (PYPSGQGLHVGH) is the 'HIGH' region element. The short motif at 575–579 (KMSKS) is the 'KMSKS' region element. Lys-578 contacts ATP.

The protein belongs to the class-I aminoacyl-tRNA synthetase family.

It is found in the cytoplasm. It carries out the reaction tRNA(Leu) + L-leucine + ATP = L-leucyl-tRNA(Leu) + AMP + diphosphate. This Lacticaseibacillus paracasei (strain ATCC 334 / BCRC 17002 / CCUG 31169 / CIP 107868 / KCTC 3260 / NRRL B-441) (Lactobacillus paracasei) protein is Leucine--tRNA ligase.